Here is an 87-residue protein sequence, read N- to C-terminus: Class II metallothionein-like protein 1A (87 aa).

Belongs to the metallothionein superfamily. Type 15 family. In terms of tissue distribution, expressed in developing seeds.

Its function is as follows. Metallothioneins have a high content of cysteine residues that bind various heavy metals. This chain is Class II metallothionein-like protein 1A (MT21A), found in Oryza sativa subsp. japonica (Rice).